The chain runs to 486 residues: Glutamyl-tRNA(Gln) amidotransferase subunit A (486 aa).

Catalysis depends on charge relay system residues lysine 79 and serine 154. The Acyl-ester intermediate role is filled by serine 178.

This sequence belongs to the amidase family. GatA subfamily. In terms of assembly, heterotrimer of A, B and C subunits.

The enzyme catalyses L-glutamyl-tRNA(Gln) + L-glutamine + ATP + H2O = L-glutaminyl-tRNA(Gln) + L-glutamate + ADP + phosphate + H(+). Its function is as follows. Allows the formation of correctly charged Gln-tRNA(Gln) through the transamidation of misacylated Glu-tRNA(Gln) in organisms which lack glutaminyl-tRNA synthetase. The reaction takes place in the presence of glutamine and ATP through an activated gamma-phospho-Glu-tRNA(Gln). This chain is Glutamyl-tRNA(Gln) amidotransferase subunit A, found in Dehalococcoides mccartyi (strain CBDB1).